The chain runs to 273 residues: Hydroxyethylthiazole kinase (273 aa).

Methionine 49 is a binding site for substrate. Lysine 125 and threonine 171 together coordinate ATP. Glycine 198 contacts substrate.

The protein belongs to the Thz kinase family. It depends on Mg(2+) as a cofactor.

The catalysed reaction is 5-(2-hydroxyethyl)-4-methylthiazole + ATP = 4-methyl-5-(2-phosphooxyethyl)-thiazole + ADP + H(+). The protein operates within cofactor biosynthesis; thiamine diphosphate biosynthesis; 4-methyl-5-(2-phosphoethyl)-thiazole from 5-(2-hydroxyethyl)-4-methylthiazole: step 1/1. In terms of biological role, catalyzes the phosphorylation of the hydroxyl group of 4-methyl-5-beta-hydroxyethylthiazole (THZ). This chain is Hydroxyethylthiazole kinase, found in Natranaerobius thermophilus (strain ATCC BAA-1301 / DSM 18059 / JW/NM-WN-LF).